We begin with the raw amino-acid sequence, 445 residues long: Interferon-activable protein 202 (445 aa).

The span at 1 to 27 (MSNRNLRSSTNSEFSEGQHQTPSSDSS) shows a compositional bias: polar residues. The segment at 1-57 (MSNRNLRSSTNSEFSEGQHQTPSSDSSGHGEDQPQASPGPNKKSHTPKKNISKGAVL) is disordered. Positions 42–51 (KKSHTPKKNI) are enriched in basic residues. 2 consecutive HIN-200 domains span residues 46-243 (TPKK…IKGE) and 244-441 (KLLK…MEVI). Required for homomultimerization regions lie at residues 82–89 (MFHATVAT) and 281–288 (MFHATVAT).

It belongs to the HIN-200 family. In terms of assembly, homomultimer; homotetramerizes (via HIN-200 domain 2), enhancing affinity for double-stranded DNA (dsDNA). Interacts (via HIN-200 domain 2) with AIM2 (via HIN-200 domain); preventing activation of the AIM2 inflammasome. Binds to several transcription factors, including NF-kappa-B p50 (NFKB1) and p65 (RELA), FOS, JUN, E2F1, E2F4, MYOD1 and myogenin. Also binds TP53/p53, the hypophosphorylated, growth-inhibitory form of the retinoblastoma protein and the p53-binding protein 1 (TP53BP1). Post-translationally, phosphorylated.

It localises to the cytoplasm. Its subcellular location is the nucleus. DNA-binding protein involved in innate immune response and has anti-inflammatory activity. Inhibits caspase activation in response to cytosolic DNA by preventing activation of the AIM2 inflammasome, probably by sequestering cytoplasmic DNA and preventing its being bound by AIM2. Also inhibits activation of the AIM2 inflammasome via a direct interaction with AIM2, which prevents the interaction between AIM2 and PYCARD and formation of the AIM2 inflammasome. Binds double-stranded DNA (dsDNA) in the cytosol. Has anti-apoptotic effects due to inhibition of the transcriptional activity of TP53/p53. Inhibits the transcriptional activity of several transcription factors, including NF-kappa-B p50 and p65, FOS, JUN, E2F1, E2F4, MYOD1 and myogenin. The sequence is that of Interferon-activable protein 202 from Mus musculus (Mouse).